We begin with the raw amino-acid sequence, 109 residues long: Fluoride-specific ion channel FluC 1 (109 aa).

The next 4 helical transmembrane spans lie at 1–21 (MVIV…YFFS), 29–49 (LPLG…VFYN), 55–75 (EVYA…STLN), and 87–107 (VFYS…FLGI). Na(+) contacts are provided by glycine 66 and threonine 69.

It belongs to the fluoride channel Fluc/FEX (TC 1.A.43) family.

The protein localises to the cell membrane. It carries out the reaction fluoride(in) = fluoride(out). Its activity is regulated as follows. Na(+) is not transported, but it plays an essential structural role and its presence is essential for fluoride channel function. In terms of biological role, fluoride-specific ion channel. Important for reducing fluoride concentration in the cell, thus reducing its toxicity. This is Fluoride-specific ion channel FluC 1 from Streptococcus pneumoniae (strain ATCC BAA-255 / R6).